A 110-amino-acid polypeptide reads, in one-letter code: DNA-binding protein Mhun_3016 (110 aa).

It belongs to the PDCD5 family.

The polypeptide is DNA-binding protein Mhun_3016 (Methanospirillum hungatei JF-1 (strain ATCC 27890 / DSM 864 / NBRC 100397 / JF-1)).